The following is a 32-amino-acid chain: Beta-1,4-galactosyltransferase 1 (32 aa).

The protein belongs to the glycosyltransferase 7 family. Mn(2+) is required as a cofactor. Post-translationally, the soluble form derives from the membrane form by proteolytic processing.

It localises to the golgi apparatus. The protein localises to the golgi stack membrane. Its subcellular location is the secreted. It is found in the cell membrane. The protein resides in the cell projection. It localises to the filopodium. The catalysed reaction is D-glucose + UDP-alpha-D-galactose = lactose + UDP + H(+). The enzyme catalyses an N-acetyl-beta-D-glucosaminyl derivative + UDP-alpha-D-galactose = a beta-D-galactosyl-(1-&gt;4)-N-acetyl-beta-D-glucosaminyl derivative + UDP + H(+). It carries out the reaction N-acetyl-D-glucosamine + UDP-alpha-D-galactose = beta-D-galactosyl-(1-&gt;4)-N-acetyl-D-glucosamine + UDP + H(+). It catalyses the reaction a beta-D-GlcNAc-(1-&gt;3)-beta-D-Gal-(1-&gt;4)-beta-D-Glc-(1&lt;-&gt;1)-Cer(d18:1(4E)) + UDP-alpha-D-galactose = a neolactoside nLc4Cer(d18:1(4E)) + UDP + H(+). The catalysed reaction is a beta-D-glucosylceramide + UDP-alpha-D-galactose = a beta-D-galactosyl-(1-&gt;4)-beta-D-glucosyl-(1&lt;-&gt;1)-ceramide + UDP + H(+). The enzyme catalyses a neolactoside IV(3)-beta-GlcNAc-nLc4Cer + UDP-alpha-D-galactose = a neolactoside nLc6Cer + UDP + H(+). Its pathway is protein modification; protein glycosylation. In terms of biological role, this protein is responsible for the synthesis of complex-type N-linked oligosaccharides in many glycoproteins as well as the carbohydrate moieties of glycolipids. This is Beta-1,4-galactosyltransferase 1 from Rattus norvegicus (Rat).